The following is an 843-amino-acid chain: Protein P (843 aa).

Residues 1-177 are terminal protein domain (TP); sequence MPLSYQHFRK…FCGSPYSWEQ (177 aa). Positions 178-346 are spacer; it reads DLQHGRLVFQ…YCLCHIVNLI (169 aa). The tract at residues 220–265 is disordered; sequence QSRLGPQPAQGQLAGRQQGGSGSIRARVHPSPWGTVGVEPSGSGPT. Residues 223 to 235 show a composition bias toward low complexity; that stretch reads LGPQPAQGQLAGR. The polymerase/reverse transcriptase domain (RT) stretch occupies residues 347 to 690; the sequence is EDWGPCTEHG…YLNLYPVARQ (344 aa). In terms of domain architecture, Reverse transcriptase spans 357 to 600; the sequence is EHLIRTPRTP…YSLNFMGYVI (244 aa). Aspartate 429, aspartate 551, and aspartate 552 together coordinate Mg(2+).

Belongs to the hepadnaviridae P protein family.

The enzyme catalyses DNA(n) + a 2'-deoxyribonucleoside 5'-triphosphate = DNA(n+1) + diphosphate. The catalysed reaction is Endonucleolytic cleavage to 5'-phosphomonoester.. Its activity is regulated as follows. Activated by host HSP70 and HSP40 in vitro to be able to bind the epsilon loop of the pgRNA. Because deletion of the RNase H region renders the protein partly chaperone-independent, the chaperones may be needed indirectly to relieve occlusion of the RNA-binding site by this domain. Inhibited by several reverse-transcriptase inhibitors: Lamivudine, Adefovir and Entecavir. Multifunctional enzyme that converts the viral RNA genome into dsDNA in viral cytoplasmic capsids. This enzyme displays a DNA polymerase activity that can copy either DNA or RNA templates, and a ribonuclease H (RNase H) activity that cleaves the RNA strand of RNA-DNA heteroduplexes in a partially processive 3'- to 5'-endonucleasic mode. Neo-synthesized pregenomic RNA (pgRNA) are encapsidated together with the P protein, and reverse-transcribed inside the nucleocapsid. Initiation of reverse-transcription occurs first by binding the epsilon loop on the pgRNA genome, and is initiated by protein priming, thereby the 5'-end of (-)DNA is covalently linked to P protein. Partial (+)DNA is synthesized from the (-)DNA template and generates the relaxed circular DNA (RC-DNA) genome. After budding and infection, the RC-DNA migrates in the nucleus, and is converted into a plasmid-like covalently closed circular DNA (cccDNA). The activity of P protein does not seem to be necessary for cccDNA generation, and is presumably released from (+)DNA by host nuclear DNA repair machinery. The protein is Protein P of Hepatitis B virus genotype B2 (isolate Vietnam/9873/1997) (HBV-B).